A 208-amino-acid polypeptide reads, in one-letter code: Small ribosomal subunit protein uS4 (208 aa).

An S4 RNA-binding domain is found at 95–157; sequence RRIDNIVYRA…DSLKKLVRSN (63 aa).

Belongs to the universal ribosomal protein uS4 family. As to quaternary structure, part of the 30S ribosomal subunit. Contacts protein S5. The interaction surface between S4 and S5 is involved in control of translational fidelity.

In terms of biological role, one of the primary rRNA binding proteins, it binds directly to 16S rRNA where it nucleates assembly of the body of the 30S subunit. Functionally, with S5 and S12 plays an important role in translational accuracy. The polypeptide is Small ribosomal subunit protein uS4 (Borrelia duttonii (strain Ly)).